Reading from the N-terminus, the 172-residue chain is MIITISGPPGSGTSTLARGLSEVLGVRWVNSGDLFRRIAAERGLSLKELGRLAEQGPEIDYLIDDAQRSLAKSGSGIFEGRLAGHMLDADLKIMLKTSLSVRASRIAKRENKSIEEALSEARAREECEARRYKMYYNIDINDLSIYDLIIDTGRWDERGTLSIALAAIRALK.

7–15 (GPPGSGTST) contacts ATP.

Belongs to the cytidylate kinase family. Type 2 subfamily.

The protein localises to the cytoplasm. It carries out the reaction CMP + ATP = CDP + ADP. It catalyses the reaction dCMP + ATP = dCDP + ADP. The chain is Cytidylate kinase from Methanothrix thermoacetophila (strain DSM 6194 / JCM 14653 / NBRC 101360 / PT) (Methanosaeta thermophila).